Reading from the N-terminus, the 210-residue chain is FMN-dependent NADH:quinone oxidoreductase (210 aa).

Residues Ser-9 and 15 to 17 (SHS) contribute to the FMN site.

This sequence belongs to the azoreductase type 1 family. Homodimer. Requires FMN as cofactor.

It catalyses the reaction 2 a quinone + NADH + H(+) = 2 a 1,4-benzosemiquinone + NAD(+). It carries out the reaction N,N-dimethyl-1,4-phenylenediamine + anthranilate + 2 NAD(+) = 2-(4-dimethylaminophenyl)diazenylbenzoate + 2 NADH + 2 H(+). Quinone reductase that provides resistance to thiol-specific stress caused by electrophilic quinones. Its function is as follows. Also exhibits azoreductase activity. Catalyzes the reductive cleavage of the azo bond in aromatic azo compounds to the corresponding amines. The chain is FMN-dependent NADH:quinone oxidoreductase from Mesorhizobium japonicum (strain LMG 29417 / CECT 9101 / MAFF 303099) (Mesorhizobium loti (strain MAFF 303099)).